Here is a 25-residue protein sequence, read N- to C-terminus: uncharacterized protein (25 aa).

It localises to the plastid. The protein localises to the chloroplast. This is an uncharacterized protein from Trieres chinensis (Marine centric diatom).